A 233-amino-acid chain; its full sequence is Uracil-DNA glycosylase (233 aa).

Catalysis depends on Asp-70, which acts as the Proton acceptor.

This sequence belongs to the uracil-DNA glycosylase (UDG) superfamily. UNG family.

The protein localises to the cytoplasm. The enzyme catalyses Hydrolyzes single-stranded DNA or mismatched double-stranded DNA and polynucleotides, releasing free uracil.. Functionally, excises uracil residues from the DNA which can arise as a result of misincorporation of dUMP residues by DNA polymerase or due to deamination of cytosine. The protein is Uracil-DNA glycosylase of Helicobacter pylori (strain G27).